We begin with the raw amino-acid sequence, 509 residues long: Metal transporter Nramp3 (509 aa).

Residues 1 to 12 are compositionally biased toward low complexity; that stretch reads MPQLENNEPLLI. The tract at residues 1–25 is disordered; it reads MPQLENNEPLLINEEEEEETAYDET. Residues 13–23 are compositionally biased toward acidic residues; that stretch reads NEEEEEETAYD. The next 12 membrane-spanning stretches (helical) occupy residues 56 to 76, 84 to 104, 133 to 153, 165 to 185, 193 to 213, 239 to 259, 285 to 305, 327 to 347, 383 to 403, 406 to 426, 444 to 464, and 472 to 492; these read LWLF…PGNL, AVAG…GLLV, MVLW…EVIG, ILPL…FLFL, LEAV…WMFG, AVGV…SALV, IALF…AKGF, YGGG…AAGQ, IIPT…LDVL, WLNV…LCLV, IAWL…LEFF, and VYTG…LYLI.

This sequence belongs to the NRAMP (TC 2.A.55) family. Expressed in vascular tissues.

The protein resides in the vacuole membrane. Its function is as follows. Vacuolar metal transporter involved in intracellular metal homeostasis. Can transport iron (Fe), manganese (Mn) and cadmium (Cd). Regulates metal accumulation under Fe starvation. Acts redundantly with NRAMP4 to mobilize vacuolar Fe and provide sufficient Fe during seed germination. In association with NRAMP4, required for optimal growth and photosynthesis under Mn deficiency. Exports Mn from vacuoles in leaf mesophyll cells, making Mn available for functional photosystem II in chloroplasts. Involved in basal resistance to the bacterial pathogen E.chrysanthemi. This Arabidopsis thaliana (Mouse-ear cress) protein is Metal transporter Nramp3 (NRAMP3).